The following is a 400-amino-acid chain: Acetate kinase (400 aa).

Asn-7 serves as a coordination point for Mg(2+). Lys-14 serves as a coordination point for ATP. Arg-91 is a substrate binding site. The active-site Proton donor/acceptor is Asp-148. ATP contacts are provided by residues 208–212 (HVGNG), 283–285 (DMR), and 331–335 (GVGEN). Glu-385 is a binding site for Mg(2+).

Belongs to the acetokinase family. In terms of assembly, homodimer. It depends on Mg(2+) as a cofactor. The cofactor is Mn(2+).

It is found in the cytoplasm. The enzyme catalyses acetate + ATP = acetyl phosphate + ADP. Its pathway is metabolic intermediate biosynthesis; acetyl-CoA biosynthesis; acetyl-CoA from acetate: step 1/2. Functionally, catalyzes the formation of acetyl phosphate from acetate and ATP. Can also catalyze the reverse reaction. This Parabacteroides distasonis (strain ATCC 8503 / DSM 20701 / CIP 104284 / JCM 5825 / NCTC 11152) protein is Acetate kinase.